The sequence spans 846 residues: Disks large-associated protein 5 (846 aa).

S67 is modified (phosphoserine; by CDK1). A coiled-coil region spans residues 90 to 120 (RKQMLQKYKEEKQLQKLKEQREKAKRGIFKV). The segment at 153–284 (TRSKAKDQME…TNATSGMNPD (132 aa)) is disordered. 2 stretches are compositionally biased toward basic and acidic residues: residues 156 to 174 (KAKD…DVRA) and 182 to 194 (TSEK…EKKV). Residue S202 is modified to Phosphoserine. Over residues 203-225 (LRMTRSATQAAKQVPRTVSSTTA) the composition is skewed to polar residues. A compositionally biased stretch (basic and acidic residues) spans 250–266 (KNVETKPDKGISCKVDS). Polar residues predominate over residues 269–281 (NTLNSQTNATSGM). T326 carries the post-translational modification Phosphothreonine. Position 329 is a phosphothreonine; by CDK1 (T329). T338 bears the Phosphothreonine mark. K347 participates in a covalent cross-link: Glycyl lysine isopeptide (Lys-Gly) (interchain with G-Cter in SUMO2). A phosphothreonine; by CDK1 mark is found at T401 and T402. S618 carries the post-translational modification Phosphoserine; by CDK1. S627 carries the post-translational modification Phosphoserine; by AURKA. Residues 628–671 (VSSEGPSQRLGTPKSVNKAVSQSRNEMGIPQQTTSPENAGPQNT) are compositionally biased toward polar residues. The segment at 628 to 674 (VSSEGPSQRLGTPKSVNKAVSQSRNEMGIPQQTTSPENAGPQNTKSE) is disordered. Residues S629 and S634 each carry the phosphoserine modification. A Phosphothreonine; by CDK1 modification is found at T639. Residue S642 is modified to Phosphoserine; by CDK1. S662 carries the post-translational modification Phosphoserine. A phosphoserine; by AURKA mark is found at S725 and S757. A Phosphothreonine; by CDK1 modification is found at T759. Residues S774 and S777 each carry the phosphoserine modification. T784 bears the Phosphothreonine mark. Residues S806 and S812 each carry the phosphoserine modification. Position 830 is a phosphoserine; by AURKA (S830). S839 is subject to Phosphoserine; by CDK1.

The protein belongs to the SAPAP family. As to quaternary structure, interacts with CDK1. Interacts with the C-terminal proline-rich region of FBXO7. Recruited by FBXO7 to a SCF (SKP1-CUL1-F-box) protein complex in a CDK1/Cyclin B-phosphorylation dependent manner. Interacts with CDH1. In terms of processing, ubiquitinated, leading to its degradation. Decreased phosphorylation levels are associated with the differentiation of intestinal epithelial cells. In terms of tissue distribution, abundantly expressed in fetal liver. Expressed at lower levels in bone marrow, testis, colon, and placenta.

It is found in the nucleus. It localises to the cytoplasm. Its subcellular location is the cytoskeleton. The protein localises to the spindle. Potential cell cycle regulator that may play a role in carcinogenesis of cancer cells. Mitotic phosphoprotein regulated by the ubiquitin-proteasome pathway. Key regulator of adherens junction integrity and differentiation that may be involved in CDH1-mediated adhesion and signaling in epithelial cells. This is Disks large-associated protein 5 (DLGAP5) from Homo sapiens (Human).